The primary structure comprises 225 residues: Uracil-DNA glycosylase (225 aa).

Catalysis depends on Asp-68, which acts as the Proton acceptor.

It belongs to the uracil-DNA glycosylase (UDG) superfamily. UNG family.

The protein resides in the cytoplasm. The catalysed reaction is Hydrolyzes single-stranded DNA or mismatched double-stranded DNA and polynucleotides, releasing free uracil.. In terms of biological role, excises uracil residues from the DNA which can arise as a result of misincorporation of dUMP residues by DNA polymerase or due to deamination of cytosine. The sequence is that of Uracil-DNA glycosylase from Mycolicibacterium gilvum (strain PYR-GCK) (Mycobacterium gilvum (strain PYR-GCK)).